A 778-amino-acid polypeptide reads, in one-letter code: MVNLDKGLLKIIKDESLEDYFIKANFGLEKENVRVTESGNLALTPHPKAFGDREKNAYIKTDFSESQLEMVTPVCNTLEEVYSFICNLNKVVSLEIMKNGEFLWPQSNPPILPREEEIPIAKLSNREDELYRENLSYKYGKKKQVISGIHYNFSFKEEFIKLLYKELKVEKDFREFKDDIYLRMARNFQKYHWLLIYLTGASPVFHESYIEEIKEEGEKLGEDSYYIKDDTSLRNSSYGYKNKKDYYVSYNSIEEYASDIKNLVKDKEIQSIKEYYNPIRLKSLGSEDMLESLLHKGIDYLEVRLLDLDPLSIQGVSKETLYLLHLFMIYTLLKENKEITYKDQEEFFKNHDMVALKGRNEEAVIYENGVPVLLKDKGREILSEMDEIVEILFSNNEEFKNVIKRALEKINNPHDTISEKLIKDIKEEGYINFHMRLAKEYLNNFKNKEFNLVGYEDLELSTQILILDAIKRGIEFNIMDRLENFISLSDGEKVEYVKQATKTSKDSYITALIMENKLVTKDILRENNIRVPKGKDYDNIDEAKKDFRLFKDEKIVIKPKSTNFGLGISIFPGEYSREDYDKAVEIAFREDSSILIEEFMTGKEYRFLVIGEEVVGILHREPANVIGNGESTIEELVSEKNKDPLRGKGYKTPLEKIKLGEIEEMFLKNQGLSFKSIPKNGEKIYLRENSNISTGGDSIDFTDKIHPSYKEVALKSAKAVKALICGVDMVIDNIEEEAKEKNHGIIELNFNPAIHIHCFPYKGENRKAGEKILDLLFN.

A glutamate--cysteine ligase region spans residues 1 to 354 (MVNLDKGLLK…EEFFKNHDMV (354 aa)). Residues 521–777 (KDILRENNIR…AGEKILDLLF (257 aa)) enclose the ATP-grasp domain. Residue 548-606 (RLFKDEKIVIKPKSTNFGLGISIFPGEYSREDYDKAVEIAFREDSSILIEEFMTGKEYR) participates in ATP binding. Residues aspartate 728, glutamate 747, and asparagine 749 each contribute to the Mg(2+) site. Positions 728, 747, and 749 each coordinate Mn(2+).

It in the N-terminal section; belongs to the glutamate--cysteine ligase type 1 family. Type 2 subfamily. In terms of assembly, monomer. It depends on Mg(2+) as a cofactor. Requires Mn(2+) as cofactor.

The catalysed reaction is L-cysteine + L-glutamate + ATP = gamma-L-glutamyl-L-cysteine + ADP + phosphate + H(+). It carries out the reaction gamma-L-glutamyl-L-cysteine + glycine + ATP = glutathione + ADP + phosphate + H(+). The protein operates within sulfur metabolism; glutathione biosynthesis; glutathione from L-cysteine and L-glutamate: step 1/2. It functions in the pathway sulfur metabolism; glutathione biosynthesis; glutathione from L-cysteine and L-glutamate: step 2/2. In terms of biological role, synthesizes glutathione from L-glutamate and L-cysteine via gamma-L-glutamyl-L-cysteine. This Clostridium perfringens (strain 13 / Type A) protein is Glutathione biosynthesis bifunctional protein GshAB.